We begin with the raw amino-acid sequence, 377 residues long: tRNA(Met) cytidine acetate ligase (377 aa).

ATP contacts are provided by residues 7–20 (VVEY…HRYH), Gly-101, Asn-151, and Arg-176.

Belongs to the TmcAL family.

It is found in the cytoplasm. It carries out the reaction cytidine(34) in elongator tRNA(Met) + acetate + ATP = N(4)-acetylcytidine(34) in elongator tRNA(Met) + AMP + diphosphate. Functionally, catalyzes the formation of N(4)-acetylcytidine (ac(4)C) at the wobble position of elongator tRNA(Met), using acetate and ATP as substrates. First activates an acetate ion to form acetyladenylate (Ac-AMP) and then transfers the acetyl group to tRNA to form ac(4)C34. This chain is tRNA(Met) cytidine acetate ligase, found in Limosilactobacillus reuteri (strain DSM 20016) (Lactobacillus reuteri).